A 186-amino-acid chain; its full sequence is Pyridoxal 5'-phosphate synthase subunit PdxT (186 aa).

46-48 (GES) serves as a coordination point for L-glutamine. Catalysis depends on C75, which acts as the Nucleophile. L-glutamine-binding positions include R101 and 129 to 130 (IR). Residues H165 and E167 each act as charge relay system in the active site.

The protein belongs to the glutaminase PdxT/SNO family. In the presence of PdxS, forms a dodecamer of heterodimers. Only shows activity in the heterodimer.

It catalyses the reaction aldehydo-D-ribose 5-phosphate + D-glyceraldehyde 3-phosphate + L-glutamine = pyridoxal 5'-phosphate + L-glutamate + phosphate + 3 H2O + H(+). The enzyme catalyses L-glutamine + H2O = L-glutamate + NH4(+). The protein operates within cofactor biosynthesis; pyridoxal 5'-phosphate biosynthesis. In terms of biological role, catalyzes the hydrolysis of glutamine to glutamate and ammonia as part of the biosynthesis of pyridoxal 5'-phosphate. The resulting ammonia molecule is channeled to the active site of PdxS. The polypeptide is Pyridoxal 5'-phosphate synthase subunit PdxT (Staphylococcus aureus (strain Mu3 / ATCC 700698)).